The primary structure comprises 176 residues: Large ribosomal subunit protein uL16 (176 aa).

This sequence belongs to the universal ribosomal protein uL16 family.

This chain is Large ribosomal subunit protein uL16, found in Sulfolobus acidocaldarius (strain ATCC 33909 / DSM 639 / JCM 8929 / NBRC 15157 / NCIMB 11770).